A 365-amino-acid polypeptide reads, in one-letter code: KEGLAPYIAETALRNLYLGSGIKEEEIEKYFKQFAKDLPGYLEDYNDEVFHQAGTVDAGAQGGGGNAGTQPPATGAAAQGGAQPPATGAAAQPPTTQGSQLPQGGATGGGGAQTGAGGTGSVTGGQRDKDVDAGTTGKITVPKLKAMSKKMRLPKAKGQDVLHLDFLLTYKPQQQDISNTRATREEFDRWYEAIKKEYELDDTQMTVVMSGLMVWCIENGCSPNISGSWTMMDGDEQTVFPLKPVIENASPTFRQIMHHFSDAAEAYIEYRNSTERYMPRYGLQRNLTDYSLARYAFDFYEMNSRTPARAKEAHMQMKAAAVRGSNTRLFGLDGNVGETQENTERHTAGDVSRNMHSLLGVQQHH.

Disordered stretches follow at residues Val-56 to Thr-136 and Gly-334 to His-365. Positions Gly-68–Gly-98 are enriched in low complexity. The segment covering Gly-105–Thr-123 has biased composition (gly residues).

It belongs to the potyviridae genome polyprotein family. In terms of processing, genome polyprotein of potyviruses undergoes post-translational proteolytic processing by the main proteinase NIa-pro resulting in the production of at least ten individual proteins. The P1 proteinase and the HC-pro cleave only their respective C-termini autocatalytically. 6K1 is essential for proper proteolytic separation of P3 from CI.

The protein localises to the virion. It catalyses the reaction RNA(n) + a ribonucleoside 5'-triphosphate = RNA(n+1) + diphosphate. Its function is as follows. An RNA-dependent RNA polymerase that plays an essential role in the virus replication. Functionally, involved in aphid transmission, cell-to-cell and systemis movement, encapsidation of the viral RNA and in the regulation of viral RNA amplification. The protein is Genome polyprotein of Eleusine (Sorghum).